The sequence spans 686 residues: WD repeat-containing protein 93 (686 aa).

Polar residues predominate over residues 1–10 (MSFPRGSQTQ). The tract at residues 1–40 (MSFPRGSQTQKIKHPIGTRKGPLEVPPPTEKDWPKDDEQD) is disordered. Basic and acidic residues predominate over residues 29–40 (TEKDWPKDDEQD). A WD repeat occupies 410-449 (PCAAPIAVSQLSCSSSYLVLACEDGVLTLWDLAKGFPLGV).

The chain is WD repeat-containing protein 93 (WDR93) from Homo sapiens (Human).